Consider the following 299-residue polypeptide: Oxygen-dependent coproporphyrinogen-III oxidase (299 aa).

Residue Ser92 participates in substrate binding. Residues His96 and His106 each coordinate a divalent metal cation. His106 (proton donor) is an active-site residue. Position 108–110 (108–110 (NVR)) interacts with substrate. A divalent metal cation-binding residues include His145 and His175. The interval 239-274 (YVEFNLVYDRGTLFGLQSGGRAESILMSLPPRVRWE) is important for dimerization. 257-259 (GGR) lines the substrate pocket.

Belongs to the aerobic coproporphyrinogen-III oxidase family. As to quaternary structure, homodimer. A divalent metal cation is required as a cofactor.

Its subcellular location is the cytoplasm. It catalyses the reaction coproporphyrinogen III + O2 + 2 H(+) = protoporphyrinogen IX + 2 CO2 + 2 H2O. It functions in the pathway porphyrin-containing compound metabolism; protoporphyrin-IX biosynthesis; protoporphyrinogen-IX from coproporphyrinogen-III (O2 route): step 1/1. Functionally, involved in the heme biosynthesis. Catalyzes the aerobic oxidative decarboxylation of propionate groups of rings A and B of coproporphyrinogen-III to yield the vinyl groups in protoporphyrinogen-IX. This chain is Oxygen-dependent coproporphyrinogen-III oxidase, found in Xanthomonas euvesicatoria pv. vesicatoria (strain 85-10) (Xanthomonas campestris pv. vesicatoria).